A 336-amino-acid chain; its full sequence is Foldase protein PrsA (336 aa).

A signal peptide spans 1–22 (MKSAKKLLSVLCLGIFILTFTA). Cys23 carries the N-palmitoyl cysteine lipid modification. Cys23 carries the S-diacylglycerol cysteine lipid modification. The region spanning 194 to 286 (PNTMNVSHIL…WGYHIIKVNS (93 aa)) is the PpiC domain.

The protein belongs to the PrsA family.

It localises to the cell membrane. It carries out the reaction [protein]-peptidylproline (omega=180) = [protein]-peptidylproline (omega=0). Plays a major role in protein secretion by helping the post-translocational extracellular folding of several secreted proteins. In Clostridium botulinum (strain ATCC 19397 / Type A), this protein is Foldase protein PrsA.